The following is a 501-amino-acid chain: Microtubule-associated protein mmb1 (501 aa).

3 stretches are compositionally biased toward polar residues: residues Asn61–Val95, Arg103–Ala122, and His132–Ala168. 3 disordered regions span residues Asn61 to Asn274, Val328 to Asn381, and Asn478 to Ile501. Over residues Ser234–Val252 the composition is skewed to low complexity. 3 stretches are compositionally biased toward polar residues: residues Asn253 to Asn274, Ser367 to Asn381, and Asn478 to Leu495.

The protein localises to the cytoplasm. Its subcellular location is the cytoskeleton. Its function is as follows. Involved in the cell polarity process and in regulation of microtubule growth. Has a role in meiosis. Involved in microtubule dynamics. Binds to mitochondria and microtubules, attaching the tubular mitochondria to the microtubule lattice at multiple discrete interaction sites. The sequence is that of Microtubule-associated protein mmb1 from Schizosaccharomyces pombe (strain 972 / ATCC 24843) (Fission yeast).